A 781-amino-acid polypeptide reads, in one-letter code: Homeobox protein SIX4 (781 aa).

The span at 1–10 (MSSSSPTGQI) shows a compositional bias: polar residues. Disordered stretches follow at residues 1 to 55 (MSSS…PLEP) and 270 to 321 (WFKN…GITN). At serine 2 the chain carries N-acetylserine. Positions 223–282 (GEETVYCFKEKSRNALKELYKQNRYPSPAEKRHLAKITGLSLTQVSNWFKNRRQRDRNPS) form a DNA-binding region, homeobox. Composition is skewed to basic and acidic residues over residues 278-290 (DRNP…KSES) and 299-308 (ESSKGHEDLS). Serine 640 bears the Phosphoserine mark.

The protein belongs to the SIX/Sine oculis homeobox family. As to quaternary structure, interacts with EYA3; acts cooperatively with EYA3 to transactivate target genes through interaction and nuclear translocation of EYA3 protein.

The protein localises to the nucleus. The protein resides in the cytoplasm. Its function is as follows. Transcriptional regulator which can act as both a transcriptional repressor and activator by binding a DNA sequence on these target genes and is involved in processes like cell differentiation, cell migration and cell survival. Transactivates gene expression by binding a 5'-[CAT]A[CT][CT][CTG]GA[GAT]-3' motif present in the Trex site and a 5'-TCA[AG][AG]TTNC-3' motif present in the MEF3 site of the muscle-specific genes enhancer. Acts cooperatively with EYA proteins to transactivate their target genes through interaction and nuclear translocation of EYA protein. Acts synergistically with SIX1 to regulate target genes involved in formation of various organs, including muscle, kidney, gonad, ganglia, olfactory epithelium and cranial skeleton. Plays a role in several important steps of muscle development. Controls the genesis of hypaxial myogenic progenitors in the dermomyotome by transactivating PAX3 and the delamination and migration of the hypaxial precursors from the ventral lip to the limb buds through the transactivation of PAX3, MET and LBX1. Controls myoblast determination by transactivating MYF5, MYOD1 and MYF6. Controls somitic differentiation in myocyte through MYOG transactivation. Plays a role in synaptogenesis and sarcomere organization by participating in myofiber specialization during embryogenesis by activating fast muscle program in the primary myotome resulting in an up-regulation of fast muscle genes, including ATP2A1, MYL1 and TNNT3. Simultaneously, is also able to activate inhibitors of slow muscle genes, such as SOX6, HRASLS, and HDAC4, thereby restricting the activation of the slow muscle genes. During muscle regeneration, negatively regulates differentiation of muscle satellite cells through down-regulation of MYOG expression. During kidney development regulates the early stages of metanephros development and ureteric bud formation through regulation of GDNF, SALL1, PAX8 and PAX2 expression. Plays a role in gonad development by regulating both testis determination and size determination. In gonadal sex determination, transactivates ZFPM2 by binding a MEF3 consensus sequence, resulting in SRY up-regulation. In gonadal size determination, transactivates NR5A1 by binding a MEF3 consensus sequence resulting in gonadal precursor cell formation regulation. During olfactory development mediates the specification and patterning of olfactory placode through fibroblast growth factor and BMP4 signaling pathways and also regulates epithelial cell proliferation during placode formation. Promotes survival of sensory neurons during early trigeminal gangliogenesis. In the developing dorsal root ganglia, up-regulates SLC12A2 transcription. Regulates early thymus/parathyroid organogenesis through regulation of GCM2 and FOXN1 expression. Forms gustatory papillae during development of the tongue. Also plays a role during embryonic cranial skeleton morphogenesis. This Homo sapiens (Human) protein is Homeobox protein SIX4 (SIX4).